We begin with the raw amino-acid sequence, 96 residues long: Protein Vpr (96 aa).

Positions 1-42 (MEQAPEDQGPQREPYNEWTLELLEELKSEAVRHFPRLWLHSL) are homooligomerization. Phosphoserine; by host is present on residues Ser-79, Ser-94, and Ser-96.

Belongs to the HIV-1 VPR protein family. Homooligomer, may form homodimer. Interacts with p6-gag region of the Pr55 Gag precursor protein through a (Leu-X-X)4 motif near the C-terminus of the P6gag protein. Interacts with host UNG. May interact with host RAD23A/HHR23A. Interacts with host VPRBP/DCAF1, leading to hijack the CUL4A-RBX1-DDB1-DCAF1/VPRBP complex, mediating ubiquitination of host proteins such as TERT and ZGPAT and arrest of the cell cycle in G2 phase. In terms of processing, phosphorylated on several residues by host. These phosphorylations regulate VPR activity for the nuclear import of the HIV-1 pre-integration complex.

The protein resides in the virion. It localises to the host nucleus. The protein localises to the host extracellular space. In terms of biological role, during virus replication, may deplete host UNG protein, and incude G2-M cell cycle arrest. Acts by targeting specific host proteins for degradation by the 26S proteasome, through association with the cellular CUL4A-DDB1 E3 ligase complex by direct interaction with host VPRPB/DCAF-1. Cell cycle arrest reportedly occurs within hours of infection and is not blocked by antiviral agents, suggesting that it is initiated by the VPR carried into the virion. Additionally, VPR induces apoptosis in a cell cycle dependent manner suggesting that these two effects are mechanistically linked. Detected in the serum and cerebrospinal fluid of AIDS patient, VPR may also induce cell death to bystander cells. During virus entry, plays a role in the transport of the viral pre-integration (PIC) complex to the host nucleus. This function is crucial for viral infection of non-dividing macrophages. May act directly at the nuclear pore complex, by binding nucleoporins phenylalanine-glycine (FG)-repeat regions. The sequence is that of Protein Vpr from Human immunodeficiency virus type 1 group M subtype B (isolate RF/HAT3) (HIV-1).